Here is a 552-residue protein sequence, read N- to C-terminus: Glutamate--tRNA ligase (552 aa).

Residues 41–51 (PSPTGFQHIGG) carry the 'HIGH' region motif. A 'KMSKS' region motif is present at residues 293–297 (KLSKR). Position 296 (Lys296) interacts with ATP.

This sequence belongs to the class-I aminoacyl-tRNA synthetase family. Glutamate--tRNA ligase type 1 subfamily. In terms of assembly, monomer.

Its subcellular location is the cytoplasm. The catalysed reaction is tRNA(Glu) + L-glutamate + ATP = L-glutamyl-tRNA(Glu) + AMP + diphosphate. In terms of biological role, catalyzes the attachment of glutamate to tRNA(Glu) in a two-step reaction: glutamate is first activated by ATP to form Glu-AMP and then transferred to the acceptor end of tRNA(Glu). This is Glutamate--tRNA ligase from Clostridium perfringens (strain SM101 / Type A).